The following is a 128-amino-acid chain: Glycine cleavage system H protein (128 aa).

One can recognise a Lipoyl-binding domain in the interval 24 to 106 (VFCVGITDHA…YDEGWLFRIR (83 aa)). Lys-65 bears the N6-lipoyllysine mark.

Belongs to the GcvH family. The glycine cleavage system is composed of four proteins: P, T, L and H. Requires (R)-lipoate as cofactor.

The glycine cleavage system catalyzes the degradation of glycine. The H protein shuttles the methylamine group of glycine from the P protein to the T protein. The polypeptide is Glycine cleavage system H protein (Edwardsiella ictaluri (strain 93-146)).